The chain runs to 1091 residues: Voltage-dependent calcium channel subunit alpha-2/delta-3 (1091 aa).

An N-terminal signal peptide occupies residues 1–33 (MAGPGSLCCASRGASALLATALLYAALGDVVRS). Residues 34–1068 (EQQIPLSVVK…HPEENARECG (1035 aa)) lie on the Extracellular side of the membrane. An N-linked (GlcNAc...) asparagine glycan is attached at asparagine 166. The VWFA domain maps to 256 to 438 (DVVILVDVSG…ENVMEYLHVL (183 aa)). A divalent metal cation-binding residues include aspartate 262, serine 264, and serine 266. The MIDAS-like motif signature appears at 262–266 (DVSGS). N-linked (GlcNAc...) asparagine glycosylation occurs at asparagine 309. Residues cysteine 412 and cysteine 1055 are joined by a disulfide bond. The Cache domain maps to 452 to 549 (WTEAYIDSTL…RPLYEEGKKR (98 aa)). Asparagine 553 and asparagine 632 each carry an N-linked (GlcNAc...) asparagine glycan. Tyrosine 924 carries the post-translational modification Phosphotyrosine. The chain crosses the membrane as a helical span at residues 1069–1089 (GASSLQAQAALLLLPLVSSLF). Topologically, residues 1090–1091 (SR) are cytoplasmic.

Belongs to the calcium channel subunit alpha-2/delta family. In terms of assembly, dimer formed of alpha-2-2 and delta-2 chains; disulfide-linked. Voltage-dependent calcium channels are multisubunit complexes, consisting of alpha-1 (CACNA1), alpha-2 (CACNA2D), beta (CACNB) and delta (CACNA2D) subunits in a 1:1:1:1 ratio. Post-translationally, N-glycosylated. May be proteolytically processed into subunits alpha-2-3 and delta-3 that are disulfide-linked. It is however unclear whether such cleavage really takes place in vivo and has a functional role. Brain-specific. Predominantly expressed in the caudate putamen, entorhinal complex, hippocampus and cortex.

The protein resides in the membrane. Its function is as follows. The alpha-2/delta subunit of voltage-dependent calcium channels regulates calcium current density and activation/inactivation kinetics of the calcium channel. Acts as a regulatory subunit for P/Q-type calcium channel (CACNA1A), N-type (CACNA1B), L-type (CACNA1C OR CACNA1D) but not T-type (CACNA1G). In Mus musculus (Mouse), this protein is Voltage-dependent calcium channel subunit alpha-2/delta-3 (Cacna2d3).